The primary structure comprises 527 residues: Mitochondrial substrate carrier family protein V (527 aa).

Residues 1-14 are compositionally biased toward basic and acidic residues; that stretch reads MNSSDFKKSFKEST. A disordered region spans residues 1–29; that stretch reads MNSSDFKKSFKESTENNSNTYRPSKTLNT. The Mitochondrial intermembrane segment spans residues 1–132; the sequence is MNSSDFKKSF…VSKKSISKEN (132 aa). Polar residues predominate over residues 15-29; the sequence is ENNSNTYRPSKTLNT. 3 Solcar repeats span residues 130-220, 253-345, and 430-519; these read KENV…CKKH, MTVP…FKII, and VNMI…CKDL. The helical transmembrane segment at 133–153 threads the bilayer; sequence VNYLVSGSIAGAISRSATAGF. The Mitochondrial matrix portion of the chain corresponds to 154 to 187; that stretch reads ERLTIIQQVQGMSQNLSQGYVGCIAAMKEMVKRE. The helical transmembrane segment at 188–208 threads the bilayer; it reads GFKSIWKGNGANIVKVSPNSG. Topologically, residues 209–258 are mitochondrial intermembrane; that stretch reads IRFLTYEFCKKHFLDNSSNHPSSSSIENGIDGNGVGCGSGSEMKMTVPQT. The helical transmembrane segment at 259 to 279 threads the bilayer; the sequence is MFSGAMAGLTSTFFTYPLDVV. Residues 280-324 are Mitochondrial matrix-facing; the sequence is RIRLSLQGSCSNDYAAHRYNGITHSFFKIHKDEGVKGLYKGLGTS. The helical transmembrane segment at 325–345 threads the bilayer; that stretch reads IASIVPWVSISFATYEGFKII. Residues 346–435 are Mitochondrial intermembrane-facing; it reads CKKMILNYQI…LKKGVNMICD (90 aa). A helical membrane pass occupies residues 436–456; the sequence is FVCGALSGAVTMTVCYPLDVL. Over 457–487 the chain is Mitochondrial matrix; that stretch reads RRRMMIQGIGGNKVLYKNGWDATKKILSNEG. A helical membrane pass occupies residues 488-508; sequence LVAFYHGIIPAYFKVVPTVAI. At 509-527 the chain is on the mitochondrial intermembrane side; that stretch reads SFAVYEICKDLGSNKYQQK.

Belongs to the mitochondrial carrier (TC 2.A.29) family.

The protein resides in the mitochondrion inner membrane. Mitochondrial solute carriers shuttle metabolites, nucleotides, and cofactors through the mitochondrial inner membrane. This chain is Mitochondrial substrate carrier family protein V (mcfV), found in Dictyostelium discoideum (Social amoeba).